The following is a 352-amino-acid chain: MVFRIASSPYTHNQRQTSRIMLLVLLAAVPGIAAQLWFFGWGTLVQILLASVSALLAEALVLKLRKQSVAATLKDNSALLTGLLLAVSIPPLAPWWMVVLGTVFAVIIAKQLYGGLGQNPFNPAMIGYVVLLISFPVQMTSWLPPHEIAVNIPGFIDAIQVIFSGHTASGGDMNTLRLGIDGISQATPLDTFKTSVRAGHSVEQIMQYPIYSGILAGAGWQWVNLAWLAGGVWLLWQKAIRWHIPLSFLVTLALCATLGWLFSPETLAAPQIHLLSGATMLGAFFILTDPVTASTTNRGRLMFGALAGLLVWLIRSFGGYPDGVAFAVLLANITVPLIDYYTRPRVYGHRKG.

5 helical membrane-spanning segments follow: residues 20-40 (IMLL…WFFG), 42-62 (GTLV…ALVL), 78-109 (ALLT…VIIA), 123-143 (PAMI…TSWL), and 148-168 (IAVN…GHTA). T187 bears the FMN phosphoryl threonine mark. 4 helical membrane-spanning segments follow: residues 214 to 234 (ILAG…GVWL), 242 to 262 (WHIP…GWLF), 267 to 287 (LAAP…FFIL), and 301 to 318 (LMFG…RSFG).

Belongs to the NqrB/RnfD family. In terms of assembly, the complex is composed of six subunits: RsxA, RsxB, RsxC, RsxD, RsxE and RsxG. It depends on FMN as a cofactor.

The protein resides in the cell inner membrane. Functionally, part of a membrane-bound complex that couples electron transfer with translocation of ions across the membrane. Required to maintain the reduced state of SoxR. The chain is Ion-translocating oxidoreductase complex subunit D from Shigella flexneri serotype 5b (strain 8401).